The primary structure comprises 714 residues: Inducible lysine decarboxylase (714 aa).

Residue K367 is modified to N6-(pyridoxal phosphate)lysine.

It belongs to the Orn/Lys/Arg decarboxylase class-I family. Homodecamer. Interacts with RavA. The cofactor is pyridoxal 5'-phosphate.

It is found in the cytoplasm. It catalyses the reaction L-lysine + H(+) = cadaverine + CO2. This chain is Inducible lysine decarboxylase (cadA), found in Salmonella typhi.